The sequence spans 145 residues: Superoxide dismutase [Mn/Fe] (145 aa).

His-10 and His-64 together coordinate Fe(3+). Mn(2+) contacts are provided by His-10 and His-64.

The protein belongs to the iron/manganese superoxide dismutase family. Mn(2+) serves as cofactor. Requires Fe(3+) as cofactor.

It carries out the reaction 2 superoxide + 2 H(+) = H2O2 + O2. Destroys superoxide anion radicals which are normally produced within the cells and which are toxic to biological systems. Catalyzes the dismutation of superoxide anion radicals into O2 and H2O2 by successive reduction and oxidation of the transition metal ion at the active site. The protein is Superoxide dismutase [Mn/Fe] (sodA) of Streptococcus acidominimus.